A 596-amino-acid chain; its full sequence is Arginine--tRNA ligase (596 aa).

Residues 128–138 (ANPTSSLHVGH) carry the 'HIGH' region motif.

Belongs to the class-I aminoacyl-tRNA synthetase family. As to quaternary structure, monomer.

The protein localises to the cytoplasm. The catalysed reaction is tRNA(Arg) + L-arginine + ATP = L-arginyl-tRNA(Arg) + AMP + diphosphate. The sequence is that of Arginine--tRNA ligase from Acinetobacter baumannii (strain SDF).